Consider the following 1472-residue polypeptide: ABC multidrug transporter atrI (1472 aa).

The tract at residues 1–28 (MRRSNVVPVHSLTSSTNTGRDSRGEKYD) is disordered. Positions 134-384 (FRRETWNFRN…FERQGWFCPP (251 aa)) constitute an ABC transporter 1 domain. N-linked (GlcNAc...) asparagine glycans are attached at residues asparagine 143, asparagine 277, asparagine 308, and asparagine 332. 7 consecutive transmembrane segments (helical) span residues 506 to 526 (ILAL…AGFY), 530 to 550 (ATLF…INSL), 580 to 600 (IPVK…LSGL), 605 to 625 (SQFF…SAVF), 639 to 659 (MTLA…VVPV), 664 to 684 (PWFK…ILIA), and 744 to 764 (FGIL…ATEL). Residues 784–793 (AHLKNGHEPG) are compositionally biased toward basic and acidic residues. The tract at residues 784–821 (AHLKNGHEPGADEEAGAGKTVVSSSAEENKQDQGITSI) is disordered. Polar residues predominate over residues 804–821 (VVSSSAEENKQDQGITSI). One can recognise an ABC transporter 2 domain in the interval 828–1070 (FTWRDVVYDI…TLLKYFESHG (243 aa)). 864 to 871 (GVSGAGKT) provides a ligand contact to ATP. The next 6 helical transmembrane spans lie at 1168–1188 (YIAA…FSFF), 1204–1224 (VFML…LFIT), 1244–1264 (FMIA…ILVF), 1282–1302 (LVLL…DFVI), 1309–1329 (ETAG…NGVM), and 1337–1357 (GFWI…GMAA). Asparagine 1402 carries N-linked (GlcNAc...) asparagine glycosylation. A helical membrane pass occupies residues 1433–1453 (FGIFWAYVVFDIAVAVMLYYC). An N-linked (GlcNAc...) asparagine glycan is attached at asparagine 1460.

Belongs to the ABC transporter superfamily. ABCG family. PDR (TC 3.A.1.205) subfamily.

The protein resides in the cell membrane. The enzyme catalyses itraconazole(in) + ATP + H2O = itraconazole(out) + ADP + phosphate + H(+). It carries out the reaction voriconazole(in) + ATP + H2O = voriconazole(out) + ADP + phosphate + H(+). It catalyses the reaction fluconazole(in) + ATP + H2O = fluconazole(out) + ADP + phosphate + H(+). Pleiotropic ABC efflux transporter involved in the basal level of azole susceptibility. Confers resistance to fluconazole, itraconazole and voriconazole. The sequence is that of ABC multidrug transporter atrI from Aspergillus fumigatus (strain ATCC MYA-4609 / CBS 101355 / FGSC A1100 / Af293) (Neosartorya fumigata).